An 81-amino-acid polypeptide reads, in one-letter code: UPF0180 protein YkuS (81 aa).

Belongs to the UPF0180 family.

The polypeptide is UPF0180 protein YkuS (ykuS) (Bacillus subtilis (strain 168)).